Here is a 327-residue protein sequence, read N- to C-terminus: F-box/LRR-repeat protein At3g58900 (327 aa).

In terms of domain architecture, F-box spans 1–47 (MDLFSSLPNELLYHILSFLSTKEAALTSVLSKRWRNLFAFVPYLEFD). LRR repeat units lie at residues 116 to 144 (DLFI…RVGS), 161 to 192 (KTLV…DMTN), 199 to 230 (NVTV…SFDA), 235 to 261 (YFYY…QINL), and 277 to 308 (EMLV…YLSP).

The protein is F-box/LRR-repeat protein At3g58900 of Arabidopsis thaliana (Mouse-ear cress).